Consider the following 430-residue polypeptide: Proteasome-activating nucleotidase (430 aa).

Residues 9-89 adopt a coiled-coil conformation; that stretch reads TELKKEKKAF…LRRELDRMRV (81 aa). ATP contacts are provided by residues 214–219 and His353; that span reads GTGKTL. Residues 428–430 are docks into pockets in the proteasome alpha-ring to cause gate opening; that stretch reads LYR.

This sequence belongs to the AAA ATPase family. Homohexamer. The hexameric complex has a two-ring architecture resembling a top hat that caps the 20S proteasome core at one or both ends. Alone, can form a complex composed of two stacked hexameric rings in vitro. Upon ATP-binding, the C-terminus of PAN interacts with the alpha-rings of the proteasome core by binding to the intersubunit pockets.

It localises to the cytoplasm. Its activity is regulated as follows. ATPase activity is inhibited by EDTA, N-ethylmaleimide (NEM) and p-chloromercuriphenyl-sulfonic acid (PCMS) in vitro. Functionally, ATPase which is responsible for recognizing, binding, unfolding and translocation of substrate proteins into the archaeal 20S proteasome core particle. Is essential for opening the gate of the 20S proteasome via an interaction with its C-terminus, thereby allowing substrate entry and access to the site of proteolysis. Thus, the C-termini of the proteasomal ATPase function like a 'key in a lock' to induce gate opening and therefore regulate proteolysis. Unfolding activity requires energy from ATP hydrolysis, whereas ATP binding alone promotes ATPase-20S proteasome association which triggers gate opening, and supports translocation of unfolded substrates. In addition to ATP, is able to cleave other nucleotide triphosphates such as CTP, GTP and UTP, but hydrolysis of these other nucleotides is less effective in promoting proteolysis than ATP. Moreover, PAN by itself can function as a chaperone in vitro. The sequence is that of Proteasome-activating nucleotidase from Methanocaldococcus jannaschii (strain ATCC 43067 / DSM 2661 / JAL-1 / JCM 10045 / NBRC 100440) (Methanococcus jannaschii).